We begin with the raw amino-acid sequence, 500 residues long: Glutamate--tRNA ligase (500 aa).

Positions 12-22 (PSPTGHLHIGN) match the 'HIGH' region motif. The short motif at 259–263 (KLSKR) is the 'KMSKS' region element. Lys-262 serves as a coordination point for ATP.

This sequence belongs to the class-I aminoacyl-tRNA synthetase family. Glutamate--tRNA ligase type 1 subfamily. As to quaternary structure, monomer.

It is found in the cytoplasm. It carries out the reaction tRNA(Glu) + L-glutamate + ATP = L-glutamyl-tRNA(Glu) + AMP + diphosphate. Its function is as follows. Catalyzes the attachment of glutamate to tRNA(Glu) in a two-step reaction: glutamate is first activated by ATP to form Glu-AMP and then transferred to the acceptor end of tRNA(Glu). The chain is Glutamate--tRNA ligase from Lactobacillus delbrueckii subsp. bulgaricus (strain ATCC BAA-365 / Lb-18).